The primary structure comprises 323 residues: tRNA uridine(34) hydroxylase (323 aa).

Residues 127–221 enclose the Rhodanese domain; it reads QDENTVVLDA…YGQDPEVQGD (95 aa). Residue Cys181 is the Cysteine persulfide intermediate of the active site.

Belongs to the TrhO family.

It carries out the reaction uridine(34) in tRNA + AH2 + O2 = 5-hydroxyuridine(34) in tRNA + A + H2O. In terms of biological role, catalyzes oxygen-dependent 5-hydroxyuridine (ho5U) modification at position 34 in tRNAs. This Oceanobacillus iheyensis (strain DSM 14371 / CIP 107618 / JCM 11309 / KCTC 3954 / HTE831) protein is tRNA uridine(34) hydroxylase.